A 560-amino-acid polypeptide reads, in one-letter code: MFS-type transporter pgmG (560 aa).

The disordered stretch occupies residues methionine 1–glutamine 32. Residues glycine 21–glutamate 31 are compositionally biased toward basic and acidic residues. 8 helical membrane-spanning segments follow: residues phenylalanine 45–valine 65, tryptophan 84–tyrosine 104, tryptophan 111–proline 131, alanine 141–asparagine 161, threonine 174–valine 194, tryptophan 201–leucine 221, leucine 242–glycine 262, and cysteine 275–glycine 295. Residue asparagine 300 is glycosylated (N-linked (GlcNAc...) asparagine). Residues phenylalanine 313–phenylalanine 333 form a helical membrane-spanning segment. The N-linked (GlcNAc...) asparagine glycan is linked to asparagine 343. The next 5 helical transmembrane spans lie at alanine 346–leucine 366, methionine 378–isoleucine 398, glycine 409–alanine 429, valine 440–alanine 460, and isoleucine 515–phenylalanine 535.

It belongs to the major facilitator superfamily. TCR/Tet family.

The protein localises to the membrane. In terms of biological role, MFS-type transporter; part of the gene cluster that mediates the biosynthesis of pleosporalin A, ascomycone A, as well as a third cryptic naphthoquinone derived pigment, all responsible for the coloration of conidia. Seems not to be involved in pigment biosynthesis although its expression is regulated by the cluster-specific transcription factor pgmR. This Aspergillus terreus protein is MFS-type transporter pgmG.